A 297-amino-acid chain; its full sequence is D-aminoacyl-tRNA deacylase (297 aa).

It belongs to the DtdA deacylase family. In terms of assembly, monomer. The cofactor is Zn(2+).

It catalyses the reaction a D-aminoacyl-tRNA + H2O = a tRNA + a D-alpha-amino acid + H(+). It carries out the reaction glycyl-tRNA(Ala) + H2O = tRNA(Ala) + glycine + H(+). Functionally, D-aminoacyl-tRNA deacylase with broad substrate specificity. By recycling D-aminoacyl-tRNA to D-amino acids and free tRNA molecules, this enzyme counteracts the toxicity associated with the formation of D-aminoacyl-tRNA entities in vivo. This is D-aminoacyl-tRNA deacylase from Methanosarcina acetivorans (strain ATCC 35395 / DSM 2834 / JCM 12185 / C2A).